Reading from the N-terminus, the 445-residue chain is Protein PRRC1 (445 aa).

Disordered stretches follow at residues Met-1–Pro-71 and Pro-105–Leu-167. Polar residues predominate over residues Met-27 to Glu-49. The span at Pro-59–Pro-71 shows a compositional bias: pro residues. Residues Ser-209 and Ser-408 each carry the phosphoserine modification.

The protein belongs to the PRRC1 family. As to quaternary structure, interacts with PRKAR1A; resulting in PKA activation. As to expression, ubiquitously expressed with higher expression in kidney, liver and placenta. Detected in embryonic kidney cells (HEK293 cells) (at protein level). In terms of tissue distribution, specifically expressed in liver.

The protein resides in the golgi apparatus. Its subcellular location is the cytoplasm. May act as a regulator of the protein kinase A (PKA) activity during embryonic development. The chain is Protein PRRC1 (PRRC1) from Homo sapiens (Human).